A 149-amino-acid chain; its full sequence is Antitoxin HigA1 (149 aa).

In terms of domain architecture, HTH cro/C1-type spans 42–96; sequence LIALRKHCQLSQVEVAKRMGVRQPTVSGFEKEPSDPKLSTLQRYARALDARLRLV. The segment at residues 53 to 72 is a DNA-binding region (H-T-H motif); it reads QVEVAKRMGVRQPTVSGFEK.

As to quaternary structure, interacts with SecB-like chaperone MT2006.

Antitoxin component of an atypical, type II toxin-antitoxin chaperone (TAC) system. Probably neutralizes the toxic effects of cognate toxin HigB1, which also requires SecB-like chaperone MT2006 (AC Q7D7P7). Autorepresses its operon (higB1-higA1-MT2006). This chain is Antitoxin HigA1, found in Mycobacterium tuberculosis (strain CDC 1551 / Oshkosh).